A 1110-amino-acid polypeptide reads, in one-letter code: RNA2 polyprotein (1110 aa).

Residues 195 to 215 (VHPGGPALPPPPPPPPIQKPP) form a disordered region. The span at 200–213 (PALPPPPPPPPIQK) shows a compositional bias: pro residues.

The protein belongs to the nepoviruses RNA2 polyprotein family. Specific enzymatic cleavages in vivo by the P1 encoded 3C-like protease yield mature proteins.

Its subcellular location is the host cell junction. The protein localises to the host plasmodesma. It is found in the virion. Functionally, implicated in RNA2 replication. Could also be required for nematode transmission of the virus. In terms of biological role, transports viral genome to neighboring plant cells directly through plasmosdesmata, without any budding. The movement protein allows efficient cell to cell propagation, by bypassing the host cell wall barrier. Acts by forming a tubular structure at the host plasmodesmata, enlarging it enough to allow free passage of virion capsids. In Arabis mosaic virus (isolate NW) (ArMV), this protein is RNA2 polyprotein.